The primary structure comprises 119 residues: uncharacterized protein (119 aa).

Positions 1–20 (MPHLAAEAHTWPPHISHSTL) are disordered. Residues 74–94 (LLFVVHQGHIGTGLIVFIICW) form a helical membrane-spanning segment.

It localises to the membrane. This is an uncharacterized protein from Saccharomyces cerevisiae (strain ATCC 204508 / S288c) (Baker's yeast).